Reading from the N-terminus, the 191-residue chain is Gene BABR protein 1 (191 aa).

This is Gene BABR protein 1 from Babesia bovis.